We begin with the raw amino-acid sequence, 339 residues long: NADPH dehydrogenase (339 aa).

FMN is bound at residue 21 to 24 (PPMC). Substrate is bound at residue Y26. A57 and Q99 together coordinate FMN. Residue 162–165 (HGAH) participates in substrate binding. FMN is bound by residues R215 and 307-308 (GR).

Belongs to the NADH:flavin oxidoreductase/NADH oxidase family. NamA subfamily. As to quaternary structure, homotetramer. FMN is required as a cofactor.

The enzyme catalyses A + NADPH + H(+) = AH2 + NADP(+). Catalyzes the reduction of the double bond of an array of alpha,beta-unsaturated aldehydes and ketones. It also reduces the nitro group of nitroester and nitroaromatic compounds. It could have a role in detoxification processes. This is NADPH dehydrogenase from Clostridium acetobutylicum (strain ATCC 824 / DSM 792 / JCM 1419 / IAM 19013 / LMG 5710 / NBRC 13948 / NRRL B-527 / VKM B-1787 / 2291 / W).